The sequence spans 192 residues: Small ribosomal subunit protein uS5 (192 aa).

A disordered region spans residues 1–21 (MAAERERGGRERGGRDRDERD). One can recognise an S5 DRBM domain in the interval 24 to 87 (FVDKLVHINR…DSAKRNLTRV (64 aa)).

Belongs to the universal ribosomal protein uS5 family. In terms of assembly, part of the 30S ribosomal subunit. Contacts proteins S4 and S8.

Its function is as follows. With S4 and S12 plays an important role in translational accuracy. In terms of biological role, located at the back of the 30S subunit body where it stabilizes the conformation of the head with respect to the body. The polypeptide is Small ribosomal subunit protein uS5 (Afipia carboxidovorans (strain ATCC 49405 / DSM 1227 / KCTC 32145 / OM5) (Oligotropha carboxidovorans)).